An 84-amino-acid chain; its full sequence is U4-theraphotoxin-Hhn1b (84 aa).

A signal peptide spans 1–22 (MKVTLTAILTCAAVLVLHTTAA). Residues 23–47 (EELEESQLMEVGMPDTELAAVDEER) constitute a propeptide that is removed on maturation. 3 cysteine pairs are disulfide-bonded: Cys51–Cys65, Cys55–Cys76, and Cys70–Cys81.

It belongs to the neurotoxin 12 (Hwtx-2) family. 02 (Hwtx-2) subfamily. As to expression, expressed by the venom gland.

The protein resides in the secreted. Functionally, postsynaptic neurotoxin. In Cyriopagopus hainanus (Chinese bird spider), this protein is U4-theraphotoxin-Hhn1b.